Consider the following 244-residue polypeptide: Large ribosomal subunit protein uL30w (244 aa).

The protein belongs to the universal ribosomal protein uL30 family.

This chain is Large ribosomal subunit protein uL30w (RPL7D), found in Arabidopsis thaliana (Mouse-ear cress).